Here is a 296-residue protein sequence, read N- to C-terminus: Enoyl-CoA hydratase ACTT3 (296 aa).

Positions 294–296 (PKL) match the Peroxisomal targeting signal type 1 motif.

It belongs to the enoyl-CoA hydratase/isomerase family.

It is found in the peroxisome. The enzyme catalyses a (3S)-3-hydroxyacyl-CoA = a (2E)-enoyl-CoA + H2O. It carries out the reaction a 4-saturated-(3S)-3-hydroxyacyl-CoA = a (3E)-enoyl-CoA + H2O. Its pathway is mycotoxin biosynthesis. Its function is as follows. Enoyl-CoA hydratase; part of the gene clusters that mediate the biosynthesis of the host-selective toxins (HSTs) ACT-toxins responsible for brown spot of tangerine disease by the tangerine pathotype which affects tangerines and mandarins. ACT-toxins consist of three moieties, 9,10-epoxy-8-hydroxy-9-methyl-decatrienoic acid (EDA), valine and a polyketide. ACT-toxin I is toxic to both citrus and pear; toxin II the 5''-deoxy derivative of ACT-toxin I, is highly toxic to pear and slightly toxic to citrus. On cellular level, ACT-toxins affect plasma membrane of susceptible cells and cause a sudden increase in loss of K(+) after a few minutes of toxin treatment. The acyl-CoA ligase ACTT1, the hydrolase ACTT2, the enoyl-CoA hydratases ACTT3 and ACTT6, and the acyl-CoA synthetase ACTT5 are all involved in the biosynthesis of the AK-, AF- and ACT-toxin common 9,10-epoxy-8-hydroxy-9-methyl-decatrienoic acid (EDA) structural moiety. The exact role of each enzyme, and of additional enzymes identified within the AF-toxin clusters have still to be determined. On the other hand, ACTTS1 to ACTTS4 are specific to the tangerine pathotype. The function of ACTTS3 is to elongate the polyketide chain portion of ACT-toxin that is unique to this toxin. The enoyl-reductase ACTTS2 might complement the missing enoyl-reductase (ER) domain in ACTTS3 in the synthesis of the polyketide portion of ACT-toxin. The roles of the nonribosomal peptide synthetases-related proteins ACTTS1 and ACTTS4 have also still not been elucidated. The protein is Enoyl-CoA hydratase ACTT3 of Alternaria alternata (Alternaria rot fungus).